A 419-amino-acid chain; its full sequence is Adenylosuccinate synthetase (419 aa).

Residues 11–17 (GDEGKGK) and 39–41 (GHT) each bind GTP. Catalysis depends on aspartate 12, which acts as the Proton acceptor. Aspartate 12 and glycine 39 together coordinate Mg(2+). IMP is bound by residues 12–15 (DEGK), 37–40 (NAGH), threonine 129, arginine 143, asparagine 218, threonine 233, and arginine 297. Histidine 40 (proton donor) is an active-site residue. Substrate is bound at residue 293-299 (VTTGRKR). Residues arginine 299, 325-327 (KLD), and 407-409 (GTG) contribute to the GTP site.

The protein belongs to the adenylosuccinate synthetase family. Homodimer. It depends on Mg(2+) as a cofactor.

The protein resides in the cytoplasm. The catalysed reaction is IMP + L-aspartate + GTP = N(6)-(1,2-dicarboxyethyl)-AMP + GDP + phosphate + 2 H(+). It functions in the pathway purine metabolism; AMP biosynthesis via de novo pathway; AMP from IMP: step 1/2. In terms of biological role, plays an important role in the de novo pathway and in the salvage pathway of purine nucleotide biosynthesis. Catalyzes the first committed step in the biosynthesis of AMP from IMP. The chain is Adenylosuccinate synthetase from Coccidioides posadasii (strain C735) (Valley fever fungus).